We begin with the raw amino-acid sequence, 122 residues long: Phospholipase A2 homolog ECS_00014 (122 aa).

Intrachain disulfides connect cysteine 26-cysteine 115, cysteine 28-cysteine 44, cysteine 43-cysteine 95, cysteine 49-cysteine 122, cysteine 50-cysteine 88, cysteine 57-cysteine 81, and cysteine 75-cysteine 86. The interval 105-117 (KKYTYYPNFWCKG) is important for membrane-damaging activities in eukaryotes and bacteria; heparin-binding.

This sequence belongs to the phospholipase A2 family. Group II subfamily. S49 sub-subfamily. Monomer. As to expression, expressed by the venom gland.

The protein resides in the secreted. Functionally, snake venom phospholipase A2 homolog that lacks enzymatic activity. Shows high myotoxin activities and displays edema-inducing activities. Has cytotoxic activities against HUVEC cells (LC(50)=12.2 uL) and human lung adenocarcinoma A549 cells (LC(50)=8.5 uL). The protein is Phospholipase A2 homolog ECS_00014 of Echis carinatus sochureki (Saw-scaled viper).